Consider the following 741-residue polypeptide: NAD(P)H-quinone oxidoreductase subunit 5, chloroplastic (741 aa).

Helical transmembrane passes span 9–29 (WVIPLLPLPVILSMGFGLFLI), 39–59 (IWAFPSVLLLSIAMVFSVQLS), 89–109 (IDPLTSIMLMLITTVGILVLI), 125–145 (FIYISFFNISMLGLVTSSNLI), 147–167 (IYFFWELVGMCSYLLIGFWFT), 184–204 (IGDFGLLLGILGFFWITGSLE), 216–238 (IPNNGTTSLLTTLCAFLLFLGAV), 258–278 (TPISALIHAATMVAAGIFLLA), 280–300 (LLPLFISLPLIMTFISLVGTI), 327–347 (LGYMMLALGIGSYQAALFHLI), 354–374 (ALLFLGSGSIIHSMEPLVGYS), 396–416 (TAFLWGTLSICGIPPLACFWS), 425–445 (WLYSPFFGIIASFTAGLTAFY), 544–564 (LFPLLILLLFTFFIGFIGIPF), 612–632 (SLVILGLFIAYIFYGSAYSFF), and 721–741 (ISSYLFFFLCYVSVFLFFFLS).

It belongs to the complex I subunit 5 family. NDH is composed of at least 16 different subunits, 5 of which are encoded in the nucleus.

The protein resides in the plastid. It localises to the chloroplast thylakoid membrane. The enzyme catalyses a plastoquinone + NADH + (n+1) H(+)(in) = a plastoquinol + NAD(+) + n H(+)(out). The catalysed reaction is a plastoquinone + NADPH + (n+1) H(+)(in) = a plastoquinol + NADP(+) + n H(+)(out). In terms of biological role, NDH shuttles electrons from NAD(P)H:plastoquinone, via FMN and iron-sulfur (Fe-S) centers, to quinones in the photosynthetic chain and possibly in a chloroplast respiratory chain. The immediate electron acceptor for the enzyme in this species is believed to be plastoquinone. Couples the redox reaction to proton translocation, and thus conserves the redox energy in a proton gradient. The sequence is that of NAD(P)H-quinone oxidoreductase subunit 5, chloroplastic (ndhF) from Brachypodium distachyon (Purple false brome).